A 689-amino-acid chain; its full sequence is Glycine--tRNA ligase beta subunit (689 aa).

Belongs to the class-II aminoacyl-tRNA synthetase family. Tetramer of two alpha and two beta subunits.

The protein resides in the cytoplasm. The catalysed reaction is tRNA(Gly) + glycine + ATP = glycyl-tRNA(Gly) + AMP + diphosphate. The protein is Glycine--tRNA ligase beta subunit of Salmonella schwarzengrund (strain CVM19633).